The primary structure comprises 189 residues: Thymidine kinase (189 aa).

ATP-binding positions include 9-16 and 85-88; these read GTMNSGKT and DECQ. Glu86 acts as the Proton acceptor in catalysis. Residues Cys143, Cys146, Cys180, and His183 each coordinate Zn(2+).

It belongs to the thymidine kinase family. As to quaternary structure, homotetramer.

The protein localises to the cytoplasm. The catalysed reaction is thymidine + ATP = dTMP + ADP + H(+). The chain is Thymidine kinase from Streptococcus agalactiae serotype Ia (strain ATCC 27591 / A909 / CDC SS700).